The chain runs to 637 residues: 3D-(3,5/4)-trihydroxycyclohexane-1,2-dione hydrolase (637 aa).

Glutamate 66 is a thiamine diphosphate binding site. The segment at 442 to 522 (SLPGDLQRLW…INVLLFDNSG (81 aa)) is thiamine pyrophosphate binding. Positions 493 and 520 each coordinate Mg(2+).

This sequence belongs to the TPP enzyme family. Mg(2+) serves as cofactor. It depends on thiamine diphosphate as a cofactor.

It carries out the reaction 3D-3,5/4-trihydroxycyclohexane-1,2-dione + H2O = 5-deoxy-D-glucuronate + H(+). It functions in the pathway polyol metabolism; myo-inositol degradation into acetyl-CoA; acetyl-CoA from myo-inositol: step 3/7. Involved in the cleavage of the C1-C2 bond of 3D-(3,5/4)-trihydroxycyclohexane-1,2-dione (THcHDO) to yield 5-deoxy-glucuronate (5DG). In Bacillus velezensis (strain DSM 23117 / BGSC 10A6 / LMG 26770 / FZB42) (Bacillus amyloliquefaciens subsp. plantarum), this protein is 3D-(3,5/4)-trihydroxycyclohexane-1,2-dione hydrolase.